Consider the following 192-residue polypeptide: dITP/XTP pyrophosphatase (192 aa).

12–17 (TNNENK) is a substrate binding site. Mg(2+)-binding residues include glutamate 41 and aspartate 70. Aspartate 70 functions as the Proton acceptor in the catalytic mechanism. Residues serine 71, 145-148 (FGFD), lysine 168, and 173-174 (HR) each bind substrate.

Belongs to the HAM1 NTPase family. In terms of assembly, homodimer. Mg(2+) is required as a cofactor.

The catalysed reaction is XTP + H2O = XMP + diphosphate + H(+). The enzyme catalyses dITP + H2O = dIMP + diphosphate + H(+). It catalyses the reaction ITP + H2O = IMP + diphosphate + H(+). Its function is as follows. Pyrophosphatase that catalyzes the hydrolysis of nucleoside triphosphates to their monophosphate derivatives, with a high preference for the non-canonical purine nucleotides XTP (xanthosine triphosphate), dITP (deoxyinosine triphosphate) and ITP. Seems to function as a house-cleaning enzyme that removes non-canonical purine nucleotides from the nucleotide pool, thus preventing their incorporation into DNA/RNA and avoiding chromosomal lesions. The chain is dITP/XTP pyrophosphatase from Saccharolobus solfataricus (strain ATCC 35092 / DSM 1617 / JCM 11322 / P2) (Sulfolobus solfataricus).